A 143-amino-acid chain; its full sequence is Hemoglobin cathodic subunit alpha (143 aa).

Position 1 is an N-acetylserine (serine 1). The region spanning 1–143 is the Globin domain; sequence SLAPGDKTVV…VCAALSDKYR (143 aa). Residue histidine 59 participates in O2 binding. Histidine 89 provides a ligand contact to heme b.

The protein belongs to the globin family. Heterotetramer of two alpha chains and two beta chains. As to expression, red blood cells.

Functionally, involved in oxygen transport from gills to the various peripheral tissues. In Gymnothorax unicolor (Brown moray), this protein is Hemoglobin cathodic subunit alpha.